Consider the following 1055-residue polypeptide: Elongation factor 3 (1055 aa).

Val-45 lines the ADP pocket. 7 HEAT repeats span residues 48 to 86 (FTQI…NGAA), 96 to 133 (SAEN…SMNP), 134 to 172 (WASF…SAPF), 176 to 213 (EAMP…LVEN), 218 to 255 (KFVP…APTI), 257 to 290 (LIAP…LVDS), and 296 to 337 (PFLP…VPAE). ABC transporter domains follow at residues 447–659 (CNIE…SYYQ) and 687–1004 (LKMR…KKAA). Residues Asn-723, Glu-933, Asn-936, and His-962 each coordinate ADP. Positions 1024 to 1055 (EKKLSAADKRKAKKDRMARRKRGEEVFSDEEL) are disordered. Positions 1033 to 1044 (RKAKKDRMARRK) are enriched in basic residues.

It belongs to the ABC transporter superfamily. ABCF family. EF3 subfamily. As to quaternary structure, interacts with CCH1; the interaction is direct and required for the localization of CCH1 to the cell membrane.

It localises to the cytoplasm. It is found in the cytosol. The enzyme catalyses ATP + H2O = ADP + phosphate + H(+). It functions in the pathway protein biosynthesis; polypeptide chain elongation. In terms of biological role, ribosome-dependent ATPase that functions in cytoplasmic translation elongation. Required for the ATP-dependent release of deacylated tRNA from the ribosomal E-site during protein biosynthesis. Stimulates the eEF1A-dependent binding of aminoacyl-tRNA to the ribosomal A-site, which has reduced affinity for tRNA as long as the E-site is occupied. Assists translation termination by stimulating the release of nascent protein from the ribosome by release factors. Appears to localize calcium-channel protein CCH1 to the plasma membrane. This chain is Elongation factor 3, found in Cryptococcus neoformans var. grubii serotype A (strain H99 / ATCC 208821 / CBS 10515 / FGSC 9487) (Filobasidiella neoformans var. grubii).